We begin with the raw amino-acid sequence, 281 residues long: MSHGTYYECEPRGGQQPLEFSGGRAGPGELGDMCEHEASIDLSAYIESGEEQLLSDLFAMKPTPEARSLKGPGAPSFPHYLPADPRPFAYPSHTFGPDRKALGPGIYSNPGSYDPRAVAVKEEPRGPEGNRGTSRGSYNPLQYQVAHCGQTAVHLPPTLAAPGQPLRVLKAPVAAAAPPCSPLLKAPSPAGPSHKGKKAVNKDSLEYRLRRERNNIAVRKSRDKAKRRIMETQQKVLEYMAENERLRNRVDQLTQELDTLRNLFRQIPEAASLIKGVGGCS.

The tract at residues 1–30 is disordered; sequence MSHGTYYECEPRGGQQPLEFSGGRAGPGEL. A Glycyl lysine isopeptide (Lys-Gly) (interchain with G-Cter in SUMO2) cross-link involves residue K121. A Phosphoserine modification is found at S181. In terms of domain architecture, bZIP spans 204-267; that stretch reads SLEYRLRRER…DTLRNLFRQI (64 aa). The segment at 208–245 is basic motif; the sequence is RLRRERNNIAVRKSRDKAKRRIMETQQKVLEYMAENER. The interval 246–267 is leucine-zipper; the sequence is LRNRVDQLTQELDTLRNLFRQI.

Belongs to the bZIP family. C/EBP subfamily. As to quaternary structure, binds DNA as a homodimer and as a heterodimer. Can form stable heterodimers with CEBPA, CEBPB and CEBPD. Interacts with GATA1 and SPI1. Interacts with SMARCD2. In terms of processing, phosphorylated.

The protein localises to the nucleus. Transcriptional activator. C/EBP are DNA-binding proteins that recognize two different motifs: the CCAAT homology common to many promoters and the enhanced core homology common to many enhancers. Required for the promyelocyte-myelocyte transition in myeloid differentiation. This chain is CCAAT/enhancer-binding protein epsilon (Cebpe), found in Mus musculus (Mouse).